A 349-amino-acid polypeptide reads, in one-letter code: Phenylalanine--tRNA ligase alpha subunit (349 aa).

Glu-262 provides a ligand contact to Mg(2+).

This sequence belongs to the class-II aminoacyl-tRNA synthetase family. Phe-tRNA synthetase alpha subunit type 1 subfamily. As to quaternary structure, tetramer of two alpha and two beta subunits. Mg(2+) serves as cofactor.

Its subcellular location is the cytoplasm. The enzyme catalyses tRNA(Phe) + L-phenylalanine + ATP = L-phenylalanyl-tRNA(Phe) + AMP + diphosphate + H(+). This chain is Phenylalanine--tRNA ligase alpha subunit, found in Sorangium cellulosum (strain So ce56) (Polyangium cellulosum (strain So ce56)).